The primary structure comprises 141 residues: Nucleoside diphosphate kinase (141 aa).

Positions 11, 59, 87, 93, 104, and 114 each coordinate ATP. H117 (pros-phosphohistidine intermediate) is an active-site residue.

The protein belongs to the NDK family. Homotetramer. Requires Mg(2+) as cofactor.

The protein localises to the cytoplasm. The catalysed reaction is a 2'-deoxyribonucleoside 5'-diphosphate + ATP = a 2'-deoxyribonucleoside 5'-triphosphate + ADP. It carries out the reaction a ribonucleoside 5'-diphosphate + ATP = a ribonucleoside 5'-triphosphate + ADP. Its function is as follows. Major role in the synthesis of nucleoside triphosphates other than ATP. The ATP gamma phosphate is transferred to the NDP beta phosphate via a ping-pong mechanism, using a phosphorylated active-site intermediate. This chain is Nucleoside diphosphate kinase, found in Vibrio vulnificus (strain CMCP6).